The primary structure comprises 91 residues: Putative regulatory protein PTH_1796 (91 aa).

It belongs to the RemA family.

This Pelotomaculum thermopropionicum (strain DSM 13744 / JCM 10971 / SI) protein is Putative regulatory protein PTH_1796.